The following is a 1074-amino-acid chain: BRD4-interacting chromatin-remodeling complex-associated protein-like (1074 aa).

4 disordered regions span residues 542–603, 620–689, 834–874, and 887–952; these read AVSS…NTPG, TSPI…GQKR, TPLD…HDQF, and GNIS…SKLP. Composition is skewed to polar residues over residues 544 to 576, 591 to 603, 620 to 629, and 660 to 680; these read SSAS…QANR, ASKS…NTPG, TSPIPTSKTT, and GATQ…TAVQ. The residue at position 621 (S621) is a Phosphoserine. Composition is skewed to basic and acidic residues over residues 889 to 904, 913 to 925, and 934 to 948; these read ISKK…KFDR, PPED…DPAK, and EGHR…HGSE. S976 is subject to Phosphoserine.

In terms of assembly, component of the multiprotein chromatin-remodeling complexes SWI/SNF: SWI/SNF-A (BAF), SWI/SNF-B (PBAF) and related complexes. The canonical complex contains a catalytic subunit (either SMARCA4/BRG1/BAF190A or SMARCA2/BRM/BAF190B) and at least SMARCE1, ACTL6A/BAF53, SMARCC1/BAF155, SMARCC2/BAF170, and SMARCB1/SNF5/BAF47. Other subunits specific to each of the complexes may also be present permitting several possible combinations developmentally and tissue specific. Component of the SWI/SNF (GBAF) subcomplex, which includes at least BICRA or BICRAL (mutually exclusive), BRD9, SS18, the core BAF subunits, SMARCA2/BRM, SMARCA4/BRG1/BAF190A, ACTL6A/BAF53, SMARCC1/BAF155, and SMARCD1/BAF60A.

In terms of biological role, component of SWI/SNF chromatin remodeling subcomplex GBAF that carries out key enzymatic activities, changing chromatin structure by altering DNA-histone contacts within a nucleosome in an ATP-dependent manner. This chain is BRD4-interacting chromatin-remodeling complex-associated protein-like, found in Mus musculus (Mouse).